The sequence spans 1256 residues: Cohesin subunit SA-3 (1256 aa).

The span at Met1–Pro22 shows a compositional bias: low complexity. Positions Met1–Pro110 are disordered. Positions Arg72–Pro83 are enriched in basic residues. Positions Phe324–Met409 constitute an SCD domain. Disordered regions lie at residues Arg1096 to Leu1169 and Lys1230 to Phe1256. Residues Asn1113 to Ala1125 show a composition bias toward polar residues. Basic residues predominate over residues Val1126–Lys1140. Pro residues predominate over residues Gly1144 to Gly1166. Ser1234 is subject to Phosphoserine.

Belongs to the SCC3 family. In terms of assembly, component of the meiosis-specific cohesin complex, which also contains the SMC1 (SMC1A or SMC1B) and SMC3 heterodimer. Such complex likely contains RAD21, or the meiosis-specific related protein REC8. Interacts with CCDC79/TERB1; recruiting cohesin to telomeres to develop structural rigidity. Phosphorylated. In terms of tissue distribution, testis specific.

It is found in the nucleus. It localises to the chromosome. In terms of biological role, meiosis specific component of cohesin complex. The cohesin complex is required for the cohesion of sister chromatids after DNA replication. The cohesin complex apparently forms a large proteinaceous ring within which sister chromatids can be trapped. At anaphase, the complex is cleaved and dissociates from chromatin, allowing sister chromatids to segregate. The meiosis-specific cohesin complex probably replaces mitosis specific cohesin complex when it dissociates from chromatin during prophase I. This is Cohesin subunit SA-3 (Stag3) from Rattus norvegicus (Rat).